A 223-amino-acid chain; its full sequence is Phosphoribosylformylglycinamidine synthase subunit PurQ (223 aa).

One can recognise a Glutamine amidotransferase type-1 domain in the interval 3–223 (FAVLVFPGSN…MVKSWREQHV (221 aa)). The Nucleophile role is filled by cysteine 85. Catalysis depends on residues histidine 193 and glutamate 195.

As to quaternary structure, part of the FGAM synthase complex composed of 1 PurL, 1 PurQ and 2 PurS subunits.

It localises to the cytoplasm. It catalyses the reaction N(2)-formyl-N(1)-(5-phospho-beta-D-ribosyl)glycinamide + L-glutamine + ATP + H2O = 2-formamido-N(1)-(5-O-phospho-beta-D-ribosyl)acetamidine + L-glutamate + ADP + phosphate + H(+). It carries out the reaction L-glutamine + H2O = L-glutamate + NH4(+). Its pathway is purine metabolism; IMP biosynthesis via de novo pathway; 5-amino-1-(5-phospho-D-ribosyl)imidazole from N(2)-formyl-N(1)-(5-phospho-D-ribosyl)glycinamide: step 1/2. Functionally, part of the phosphoribosylformylglycinamidine synthase complex involved in the purines biosynthetic pathway. Catalyzes the ATP-dependent conversion of formylglycinamide ribonucleotide (FGAR) and glutamine to yield formylglycinamidine ribonucleotide (FGAM) and glutamate. The FGAM synthase complex is composed of three subunits. PurQ produces an ammonia molecule by converting glutamine to glutamate. PurL transfers the ammonia molecule to FGAR to form FGAM in an ATP-dependent manner. PurS interacts with PurQ and PurL and is thought to assist in the transfer of the ammonia molecule from PurQ to PurL. The polypeptide is Phosphoribosylformylglycinamidine synthase subunit PurQ (Staphylococcus aureus (strain bovine RF122 / ET3-1)).